The chain runs to 830 residues: Serine/threonine-protein kinase atg1 (830 aa).

A Protein kinase domain is found at 14–307; it reads YVIRSEIGRG…YDGFFSSIVV (294 aa). Residues 20–28 and Lys-43 each bind ATP; that span reads IGRGSFAIV. Asp-157 (proton acceptor) is an active-site residue. Position 346 is a phosphoserine (Ser-346). Residues 448 to 468 show a composition bias toward polar residues; that stretch reads TQLSNESLTHEQSINGNSPSP. The interval 448 to 480 is disordered; the sequence is TQLSNESLTHEQSINGNSPSPNEGVFQGSFSPE.

The protein belongs to the protein kinase superfamily. Ser/Thr protein kinase family. APG1/unc-51/ULK1 subfamily. Homodimer. Component of the atg1 kinase complex composed of at least atg1, atg13, atg17 and atg101. Interacts directly with atg13. In terms of processing, phosphorylated. Dephosphorylated under depletion of nitrogen.

The catalysed reaction is L-seryl-[protein] + ATP = O-phospho-L-seryl-[protein] + ADP + H(+). It carries out the reaction L-threonyl-[protein] + ATP = O-phospho-L-threonyl-[protein] + ADP + H(+). In terms of biological role, serine/threonine protein kinase involved in the cytoplasm to vacuole transport (Cvt) and found to be essential in autophagy, where it is required for the formation of autophagosomes. Involved in the clearance of protein aggregates which cannot be efficiently cleared by the proteasome. Required for selective autophagic degradation of the nucleus (nucleophagy) as well as for mitophagy which contributes to regulate mitochondrial quantity and quality by eliminating the mitochondria to a basal level to fulfill cellular energy requirements and preventing excess ROS production. Also involved in endoplasmic reticulum-specific autophagic process, in selective removal of ER-associated degradation (ERAD) substrates. Plays a key role in ATG9 and ATG23 cycling through the pre-autophagosomal structure and is necessary to promote ATG18 binding to ATG9 through phosphorylation of ATG9. Catalyzes phosphorylation of ATG4, decreasing the interaction between ATG4 and ATG8 and impairing deconjugation of PE-conjugated forms of ATG8. Autophagy functions to supply nitrogen and is activated when cells cannot access exogenous nitrogen, thus ensuring that they can adapt and subsequently propagate. Finally, atg13 is also required for glycogen storage during stationary phase and has a role in meiosis and sporulation. The protein is Serine/threonine-protein kinase atg1 of Schizosaccharomyces pombe (strain 972 / ATCC 24843) (Fission yeast).